A 255-amino-acid chain; its full sequence is Aliphatic sulfonates import ATP-binding protein SsuB (255 aa).

One can recognise an ABC transporter domain in the interval 7-231; sequence IKEKAFVQEG…PRNRTTPDFQ (225 aa). 39–46 provides a ligand contact to ATP; it reads GPSGCGKS.

The protein belongs to the ABC transporter superfamily. Aliphatic sulfonates importer (TC 3.A.1.17.2) family. In terms of assembly, the complex is composed of two ATP-binding proteins (SsuB), two transmembrane proteins (SsuC) and a solute-binding protein (SsuA).

It localises to the cell membrane. The catalysed reaction is ATP + H2O + aliphatic sulfonate-[sulfonate-binding protein]Side 1 = ADP + phosphate + aliphatic sulfonateSide 2 + [sulfonate-binding protein]Side 1.. Part of the ABC transporter complex SsuABC involved in aliphatic sulfonates import. Responsible for energy coupling to the transport system. Is also involved in taurine transport. This is Aliphatic sulfonates import ATP-binding protein SsuB from Bacillus subtilis (strain 168).